The primary structure comprises 204 residues: Ras-related protein Rab-7L1 (204 aa).

Residues S33, K34, H35, Y36, K37, and T39 each coordinate GTP. The Effector region motif lies at 36 to 44 (YKSTVGVDF). The residue at position 71 (T71) is a Phosphothreonine; by LRRK2. Phosphoserine is present on S72. GTP contacts are provided by K126, V156, and K157. Residues C203 and C204 are each lipidated (S-geranylgeranyl cysteine).

It belongs to the small GTPase superfamily. Rab family. In terms of assembly, interacts with LRRK2 (via the N-terminus); this interaction is direct and stimulates kinase activity. Expressed predominantly in kidney and much less in brain, heart, muscle, fat, liver, spleen, adrenal gland, ovary, thymus and lung. Not expressed in testis and intestine.

The protein resides in the cell membrane. The protein localises to the cytoplasm. It localises to the perinuclear region. Its subcellular location is the golgi apparatus. It is found in the golgi apparatus membrane. The protein resides in the trans-Golgi network. The protein localises to the cytoskeleton. In terms of biological role, the small GTPases Rab are key regulators in vesicle trafficking. Essential for maintaining the integrity of endosome-trans-Golgi network structure. Together with LRRK2, plays a role in the retrograde trafficking pathway for recycling proteins, such as mannose 6 phosphate receptor (M6PR), between lysosomes and the Golgi apparatus in a retromer-dependent manner. Recruits LRRK2 to the Golgi apparatus and stimulates LRRK2 kinase activity. Stimulates phosphorylation of RAB10 'Thr-73' by LRRK2. Regulates also neuronal process morphology in the intact central nervous system (CNS). The chain is Ras-related protein Rab-7L1 (Rab29) from Rattus norvegicus (Rat).